Here is a 1291-residue protein sequence, read N- to C-terminus: Vacuolating cytotoxin autotransporter (1291 aa).

An N-terminal signal peptide occupies residues 1 to 33 (MEIQQTHRKINRPLVSLALVGALVSITPQQSHA). Residues 326 to 374 (PPEGGYKDKPNDKPSNTTQNNAKNDKQESSQNNSNTQVINPPNSAQKTE) are disordered. 2 stretches are compositionally biased toward polar residues: residues 338 to 347 (KPSNTTQNNA) and 354 to 374 (SSQN…QKTE). In terms of domain architecture, Autotransporter spans 1018–1291 (KYEKPTNVWA…ASNLGMRYSF (274 aa)).

It localises to the periplasm. The protein localises to the secreted. It is found in the cell surface. Its subcellular location is the cell outer membrane. Induces vacuolation of eukaryotic cells. Causes ulceration and gastric lesions. This Helicobacter pylori (Campylobacter pylori) protein is Vacuolating cytotoxin autotransporter (vacA).